We begin with the raw amino-acid sequence, 82 residues long: Small ribosomal subunit protein bS16 (82 aa).

It belongs to the bacterial ribosomal protein bS16 family.

The chain is Small ribosomal subunit protein bS16 from Pectobacterium atrosepticum (strain SCRI 1043 / ATCC BAA-672) (Erwinia carotovora subsp. atroseptica).